The primary structure comprises 104 residues: Large ribosomal subunit protein uL24 (104 aa).

It belongs to the universal ribosomal protein uL24 family. As to quaternary structure, part of the 50S ribosomal subunit.

One of two assembly initiator proteins, it binds directly to the 5'-end of the 23S rRNA, where it nucleates assembly of the 50S subunit. In terms of biological role, one of the proteins that surrounds the polypeptide exit tunnel on the outside of the subunit. The polypeptide is Large ribosomal subunit protein uL24 (Methylorubrum populi (strain ATCC BAA-705 / NCIMB 13946 / BJ001) (Methylobacterium populi)).